We begin with the raw amino-acid sequence, 107 residues long: Nucleoid-associated protein YaaK (107 aa).

A disordered region spans residues 1–24; the sequence is MRGGMGNMQKMMKQMQKMQKDMAK. A compositionally biased stretch (low complexity) spans 8–17; the sequence is MQKMMKQMQK.

Belongs to the YbaB/EbfC family. In terms of assembly, homodimer.

It localises to the cytoplasm. The protein resides in the nucleoid. Functionally, binds to DNA and alters its conformation. May be involved in regulation of gene expression, nucleoid organization and DNA protection. The protein is Nucleoid-associated protein YaaK (yaaK) of Bacillus subtilis (strain 168).